The primary structure comprises 347 residues: S-adenosylmethionine:tRNA ribosyltransferase-isomerase (347 aa).

The protein belongs to the QueA family. Monomer.

It is found in the cytoplasm. The enzyme catalyses 7-aminomethyl-7-carbaguanosine(34) in tRNA + S-adenosyl-L-methionine = epoxyqueuosine(34) in tRNA + adenine + L-methionine + 2 H(+). It participates in tRNA modification; tRNA-queuosine biosynthesis. Transfers and isomerizes the ribose moiety from AdoMet to the 7-aminomethyl group of 7-deazaguanine (preQ1-tRNA) to give epoxyqueuosine (oQ-tRNA). This is S-adenosylmethionine:tRNA ribosyltransferase-isomerase from Bordetella pertussis (strain Tohama I / ATCC BAA-589 / NCTC 13251).